The sequence spans 95 residues: MSIDQSTAAKVAKLARIKVEEDALPALAEEFNTILGFIEQLNEVDVEGVEPMTSVTPQRLKRREDVVTDGNQQDKVLANAPDAREGFFAVPKVVE.

The protein belongs to the GatC family. In terms of assembly, heterotrimer of A, B and C subunits.

It catalyses the reaction L-glutamyl-tRNA(Gln) + L-glutamine + ATP + H2O = L-glutaminyl-tRNA(Gln) + L-glutamate + ADP + phosphate + H(+). The enzyme catalyses L-aspartyl-tRNA(Asn) + L-glutamine + ATP + H2O = L-asparaginyl-tRNA(Asn) + L-glutamate + ADP + phosphate + 2 H(+). Its function is as follows. Allows the formation of correctly charged Asn-tRNA(Asn) or Gln-tRNA(Gln) through the transamidation of misacylated Asp-tRNA(Asn) or Glu-tRNA(Gln) in organisms which lack either or both of asparaginyl-tRNA or glutaminyl-tRNA synthetases. The reaction takes place in the presence of glutamine and ATP through an activated phospho-Asp-tRNA(Asn) or phospho-Glu-tRNA(Gln). In Ruegeria sp. (strain TM1040) (Silicibacter sp.), this protein is Aspartyl/glutamyl-tRNA(Asn/Gln) amidotransferase subunit C.